The chain runs to 892 residues: Alanine--tRNA ligase (892 aa).

Histidine 594, histidine 598, cysteine 702, and histidine 706 together coordinate Zn(2+).

The protein belongs to the class-II aminoacyl-tRNA synthetase family. Zn(2+) serves as cofactor.

The protein localises to the cytoplasm. The enzyme catalyses tRNA(Ala) + L-alanine + ATP = L-alanyl-tRNA(Ala) + AMP + diphosphate. In terms of biological role, catalyzes the attachment of alanine to tRNA(Ala) in a two-step reaction: alanine is first activated by ATP to form Ala-AMP and then transferred to the acceptor end of tRNA(Ala). Also edits incorrectly charged Ser-tRNA(Ala) and Gly-tRNA(Ala) via its editing domain. This is Alanine--tRNA ligase from Pyrobaculum aerophilum (strain ATCC 51768 / DSM 7523 / JCM 9630 / CIP 104966 / NBRC 100827 / IM2).